A 500-amino-acid chain; its full sequence is NAD(P)H-quinone oxidoreductase chain 4, chloroplastic (500 aa).

A run of 14 helical transmembrane segments spans residues 4 to 24, 35 to 55, 87 to 107, 113 to 130, 134 to 154, 167 to 187, 208 to 228, 242 to 262, 272 to 292, 305 to 325, 330 to 350, 386 to 406, 416 to 436, and 463 to 483; these read FPWL…IFFF, YTIC…CYHF, IGPV…AWPV, LFHF…GSFS, LLLF…LLSM, FILY…GMGL, ALEI…LPII, HYST…YGLV, AHSI…IYAA, IAYS…SITD, GAIL…FLAG, LALP…GIIT, ILIT…SLSM, and FVSI…DFVF.

This sequence belongs to the complex I subunit 4 family.

It localises to the plastid. Its subcellular location is the chloroplast thylakoid membrane. It carries out the reaction a plastoquinone + NADH + (n+1) H(+)(in) = a plastoquinol + NAD(+) + n H(+)(out). The enzyme catalyses a plastoquinone + NADPH + (n+1) H(+)(in) = a plastoquinol + NADP(+) + n H(+)(out). This Nandina domestica (Heavenly bamboo) protein is NAD(P)H-quinone oxidoreductase chain 4, chloroplastic.